Reading from the N-terminus, the 479-residue chain is uncharacterized protein (479 aa).

Transmembrane regions (helical) follow at residues 25–45 (VVFV…LFFF), 63–83 (IAMI…LAGG), 110–130 (LFGP…TVIF), 133–153 (GVFN…AGIL), 175–195 (VLSI…VLGI), 229–249 (ILLY…IVWL), 287–307 (LILN…IAFI), and 328–348 (LFAP…LLLL).

It in the C-terminal section; belongs to the GatC family.

The protein resides in the cell membrane. This is an uncharacterized protein from Mycoplasma pneumoniae (strain ATCC 29342 / M129 / Subtype 1) (Mycoplasmoides pneumoniae).